Reading from the N-terminus, the 428-residue chain is D-amino acid dehydrogenase (428 aa).

Residue 3-17 participates in FAD binding; it reads VVILGSGVVGVASAY.

It belongs to the DadA oxidoreductase family. The cofactor is FAD.

The enzyme catalyses a D-alpha-amino acid + A + H2O = a 2-oxocarboxylate + AH2 + NH4(+). Its pathway is amino-acid degradation; D-alanine degradation; NH(3) and pyruvate from D-alanine: step 1/1. Its function is as follows. Oxidative deamination of D-amino acids. This is D-amino acid dehydrogenase from Burkholderia vietnamiensis (strain G4 / LMG 22486) (Burkholderia cepacia (strain R1808)).